Here is a 162-residue protein sequence, read N- to C-terminus: Phosphopantetheine adenylyltransferase (162 aa).

Threonine 9 serves as a coordination point for substrate. ATP contacts are provided by residues 9–10 (TF) and histidine 17. Substrate is bound by residues lysine 41, leucine 73, and arginine 87. ATP is bound by residues 88–90 (GLR), glutamate 98, and 123–129 (FAFLSST).

It belongs to the bacterial CoaD family. In terms of assembly, homohexamer. The cofactor is Mg(2+).

It localises to the cytoplasm. It carries out the reaction (R)-4'-phosphopantetheine + ATP + H(+) = 3'-dephospho-CoA + diphosphate. Its pathway is cofactor biosynthesis; coenzyme A biosynthesis; CoA from (R)-pantothenate: step 4/5. Reversibly transfers an adenylyl group from ATP to 4'-phosphopantetheine, yielding dephospho-CoA (dPCoA) and pyrophosphate. This is Phosphopantetheine adenylyltransferase from Vibrio atlanticus (strain LGP32) (Vibrio splendidus (strain Mel32)).